Reading from the N-terminus, the 344-residue chain is Glycerol-3-phosphate dehydrogenase [NAD(P)+] (344 aa).

Serine 11, tryptophan 12, histidine 32, arginine 33, and lysine 106 together coordinate NADPH. Lysine 106, glycine 136, and serine 138 together coordinate sn-glycerol 3-phosphate. Residue alanine 140 participates in NADPH binding. Sn-glycerol 3-phosphate-binding residues include lysine 192, aspartate 245, serine 255, arginine 256, and asparagine 257. Lysine 192 (proton acceptor) is an active-site residue. Position 256 (arginine 256) interacts with NADPH. NADPH contacts are provided by valine 280 and glutamate 282.

Belongs to the NAD-dependent glycerol-3-phosphate dehydrogenase family.

It is found in the cytoplasm. The enzyme catalyses sn-glycerol 3-phosphate + NAD(+) = dihydroxyacetone phosphate + NADH + H(+). It carries out the reaction sn-glycerol 3-phosphate + NADP(+) = dihydroxyacetone phosphate + NADPH + H(+). It participates in membrane lipid metabolism; glycerophospholipid metabolism. Its function is as follows. Catalyzes the reduction of the glycolytic intermediate dihydroxyacetone phosphate (DHAP) to sn-glycerol 3-phosphate (G3P), the key precursor for phospholipid synthesis. This is Glycerol-3-phosphate dehydrogenase [NAD(P)+] from Geobacillus kaustophilus (strain HTA426).